Consider the following 134-residue polypeptide: Phospholipase A2 (134 aa).

Positions 8, 10, and 12 each coordinate Ca(2+). 5 disulfide bridges follow: cysteine 9-cysteine 31, cysteine 30-cysteine 70, cysteine 37-cysteine 63, cysteine 61-cysteine 95, and cysteine 105-cysteine 113. Asparagine 13 is a glycosylation site (N-linked (GlcNAc...) asparagine). Histidine 34 is a catalytic residue. Aspartate 35 serves as a coordination point for Ca(2+). Aspartate 64 is an active-site residue.

It belongs to the phospholipase A2 family. Group III subfamily. Requires Ca(2+) as cofactor. In terms of tissue distribution, expressed by the venom gland.

It localises to the secreted. It carries out the reaction a 1,2-diacyl-sn-glycero-3-phosphocholine + H2O = a 1-acyl-sn-glycero-3-phosphocholine + a fatty acid + H(+). Functionally, PLA2 catalyzes the calcium-dependent hydrolysis of the 2-acyl groups in 3-sn-phosphoglycerides. This Apis dorsata (Giant honeybee) protein is Phospholipase A2.